The sequence spans 219 residues: Dephospho-CoA kinase (219 aa).

One can recognise a DPCK domain in the interval 8-215; the sequence is LVGVTGGIGS…EAAASGPDCQ (208 aa). 16–21 serves as a coordination point for ATP; it reads GSGKST.

This sequence belongs to the CoaE family.

The protein localises to the cytoplasm. The enzyme catalyses 3'-dephospho-CoA + ATP = ADP + CoA + H(+). It participates in cofactor biosynthesis; coenzyme A biosynthesis; CoA from (R)-pantothenate: step 5/5. In terms of biological role, catalyzes the phosphorylation of the 3'-hydroxyl group of dephosphocoenzyme A to form coenzyme A. The polypeptide is Dephospho-CoA kinase (Chlorobium luteolum (strain DSM 273 / BCRC 81028 / 2530) (Pelodictyon luteolum)).